The sequence spans 257 residues: Cytosolic Fe-S cluster assembly factor NUBP2 homolog (257 aa).

Gly-14–Ser-21 contacts ATP. Residues Cys-188 and Cys-191 each contribute to the [4Fe-4S] cluster site.

The protein belongs to the Mrp/NBP35 ATP-binding proteins family. NUBP2/CFD1 subfamily. In terms of assembly, heterotetramer of 2 NUBP1 and 2 NUBP2 chains. [4Fe-4S] cluster serves as cofactor.

The protein localises to the cytoplasm. Functionally, component of the cytosolic iron-sulfur (Fe/S) protein assembly (CIA) machinery. Required for maturation of extramitochondrial Fe-S proteins. The NUBP1-NUBP2 heterotetramer forms a Fe-S scaffold complex, mediating the de novo assembly of an Fe-S cluster and its transfer to target apoproteins. This Culex quinquefasciatus (Southern house mosquito) protein is Cytosolic Fe-S cluster assembly factor NUBP2 homolog.